An 868-amino-acid polypeptide reads, in one-letter code: Facilitated trehalose transporter Tret1 (868 aa).

Disordered regions lie at residues 1-213 (MSGR…QKAT) and 257-314 (KESS…LIHR). Topologically, residues 1–403 (MSGRDNRGAG…VYRPTTNPIY (403 aa)) are cytoplasmic. A compositionally biased stretch (basic and acidic residues) spans 25 to 43 (KLKEKLTRAGDDQGYHRVE). Composition is skewed to low complexity over residues 44–57 (SNLSTSNTATSLDT), 79–91 (PQQQQQQQRQQLR), and 117–126 (PFQQQQQRTP). 2 stretches are compositionally biased toward basic and acidic residues: residues 146–155 (EIREHRDRQQ) and 257–290 (KESSSEEEFHKTRREFQGRKHQSLDPRVTFKLDK). A phosphoserine mark is found at serine 259, serine 260, serine 261, serine 331, and serine 333. Positions 335–367 (EDFHTSRQHFQQQRSISTDSRKSRRPYEMDEMG) are disordered. Residues 342-352 (QHFQQQRSIST) are compositionally biased toward polar residues. Over residues 353-367 (DSRKSRRPYEMDEMG) the composition is skewed to basic and acidic residues. A helical membrane pass occupies residues 404–424 (IWTQVLAALSVSLGSLVVGFV). Over 425-451 (SAYTSPALVSMTNRNMTSFEVTPQAAS) the chain is Extracellular. N-linked (GlcNAc...) asparagine glycosylation is present at asparagine 439. The chain crosses the membrane as a helical span at residues 452–472 (WVGGIMPLAGLAGGIAGGPFI). Topologically, residues 473 to 484 (EYLGRRNTILAT) are cytoplasmic. A helical membrane pass occupies residues 485-505 (AIPFIVSSLLIACAVNVAMVL). Residues 506–508 (AGR) lie on the Extracellular side of the membrane. The chain crosses the membrane as a helical span at residues 509-529 (FLAGFCVGIASLSLPVYLGET). The Cytoplasmic portion of the chain corresponds to 530–535 (VQPEVR). A helical transmembrane segment spans residues 536–556 (GTLGLLPTAFGNIGILLCFVA). Topologically, residues 557–563 (GTYMDWS) are extracellular. The chain crosses the membrane as a helical span at residues 564-584 (MLAFLGAALPVPFLILMFLIP). Residues 585-653 (ETPRWFVSRG…NLKPLSISLG (69 aa)) are Cytoplasmic-facing. The helical transmembrane segment at 654 to 674 (LMFFQQLSGINAVIFYTVSIF) threads the bilayer. Over 675-684 (KDAGSTIDGN) the chain is Extracellular. Residues 685–705 (LCTIIVGIVNFMATFIATLLI) traverse the membrane as a helical segment. Over 706–711 (DRAGRK) the chain is Cytoplasmic. Residues 712–732 (ILLYVSNIAMIITLFVLGGFF) traverse the membrane as a helical segment. Topologically, residues 733-751 (YCKSHGQDVSQLGWLPLSC) are extracellular. Residues 752–772 (FVIYILGFSLGFGPIPWLMMG) form a helical membrane-spanning segment. At 773-778 (EILPSK) the chain is on the cytoplasmic side. A helical transmembrane segment spans residues 779 to 799 (IRGSAASVATAFNWSCTFVVT). The Extracellular segment spans residues 800-812 (KTFQDMIDFMGAH). A helical transmembrane segment spans residues 813-833 (GAFWLFGSICFIGLFFVILYV). The Cytoplasmic segment spans residues 834–868 (PETQGKTLEDIERKMMGRVRRMSSVANMKPLAFNM). A phosphoserine mark is found at serine 856 and serine 857.

This sequence belongs to the major facilitator superfamily. Sugar transporter (TC 2.A.1.1) family. Trehalose transporter subfamily.

It is found in the cell membrane. Low-capacity facilitative transporter for trehalose. Does not transport maltose, sucrose or lactose. Mediates the bidirectional transfer of trehalose. Responsible for the transport of trehalose synthesized in the fat body and the incorporation of trehalose into other tissues that require a carbon source, thereby regulating trehalose levels in the hemolymph. This Drosophila pseudoobscura pseudoobscura (Fruit fly) protein is Facilitated trehalose transporter Tret1.